Consider the following 432-residue polypeptide: Probable N-acetylmuramoyl-L-alanine amidase AmiB (432 aa).

An N-terminal signal peptide occupies residues 1 to 20 (MKTKILFFLFFSTFSFSIFA). In terms of domain architecture, MurNAc-LAA spans 25-244 (IAIDPGHGGK…IAYMIYEGLV (220 aa)). 2 consecutive LysM domains span residues 292-335 (IRHI…SIKI) and 385-429 (LYHK…KIKL).

The protein belongs to the N-acetylmuramoyl-L-alanine amidase 3 family.

The protein resides in the periplasm. It carries out the reaction Hydrolyzes the link between N-acetylmuramoyl residues and L-amino acid residues in certain cell-wall glycopeptides.. In terms of biological role, cell-wall hydrolase involved in septum cleavage during cell division. In Haemophilus influenzae (strain ATCC 51907 / DSM 11121 / KW20 / Rd), this protein is Probable N-acetylmuramoyl-L-alanine amidase AmiB (amiB).